Reading from the N-terminus, the 182-residue chain is Nuclear cap-binding protein subunit 2 (182 aa).

Residues Y13, Y35, 104–108 (RADLD), 115–119 (RQYGR), and 125–126 (QV) each bind mRNA. Residues 32-110 (NCVYVGNLSF…RIIRADLDHG (79 aa)) form the RRM domain. The tract at residues 114 to 182 (GRQYGRGASG…NPRYNRWKKN (69 aa)) is disordered. A compositionally biased stretch (basic and acidic residues) spans 126-136 (VRDEMREEFDP). Positions 145-175 (RQPTSSRQLANYSGISSAPLGSSLELQSNPR) are enriched in polar residues.

Belongs to the RRM NCBP2 family. As to quaternary structure, component of the nuclear cap-binding complex (CBC), a heterodimer composed of cbc1 and cbc2 that interacts with capped RNAs.

Its subcellular location is the cytoplasm. The protein resides in the perinuclear region. The protein localises to the nucleus. In terms of biological role, component of the CBC complex, which binds co-transcriptionally to the 5' cap of pre-mRNAs and is involved in maturation, export and degradation of nuclear mRNAs. The protein is Nuclear cap-binding protein subunit 2 (cbc2) of Schizosaccharomyces pombe (strain 972 / ATCC 24843) (Fission yeast).